The primary structure comprises 703 residues: Meiotic coiled-coil protein 2 (703 aa).

Polar residues-rich tracts occupy residues M1 to E19 and T245 to L258. Disordered stretches follow at residues M1–N29, T245–L265, and A284–S309. One can recognise a PUM-HD domain in the interval N331–N686. Pumilio repeat units lie at residues N361–D396, S397–S432, A433–D468, E469–N504, A509–E544, E545–D580, A581–K616, and R625–T660.

The sequence is that of Meiotic coiled-coil protein 2 (mcp2) from Schizosaccharomyces pombe (strain 972 / ATCC 24843) (Fission yeast).